A 146-amino-acid chain; its full sequence is Horcolin (146 aa).

The disordered stretch occupies residues 1–21; it reads MSKPVKIGPWGGNGGSERDVQ. One can recognise a Jacalin-type lectin domain in the interval 4–146; sequence PVKIGPWGGN…LDAIGFYITP (143 aa).

It belongs to the jacalin lectin family.

Its subcellular location is the secreted. The protein localises to the extracellular space. It is found in the apoplast. Its function is as follows. Mannose-specific lectin. Has a weak agglutinating activity against rabbit erythrocytes. This Hordeum vulgare (Barley) protein is Horcolin.